A 627-amino-acid polypeptide reads, in one-letter code: MVDDSNYLTPHETALAVVATAMKKARLQLDTLLINSILGGVLFSSGSFLLVAVYSEDPDIVARNPGIVNLITGVNFAMGLFYVVMMGADLFNSNILFFSVGVLRKAVTIYDLMISWVVSWLGNIAGSLFVSYLFGHLSGISSQKLWIIGSRQIIEQKVSYSFVQTFLKGIACNFFVCLAIYLQLMAKPIHVKFILMSFPIIDFIGIGFTHVVGDMSASFIAMLNGANVSVGKYIWKLLIPASLGNIVGGLFFSAVVPFYLHLVVVERDRKRLSLPEYEARDEQPELNMDSRVVRIQKNECDDDATETGEDLENLTEKGFASIYNTNHDNSSYFTGRSLNSLRSIPSSVITSDNVTMESDLGEPVQFIPKSNSTTRSPHLGLPHNLPHNHSIKSINRHRINKRHSLRSPPGVFPVRGMGEPLEREKTIEDATYDPKENELFLRRAETHNSAYVKNKKKEDDNLLRLVKTEEDREQKEYEKNGGYNILENKPGTRLEKIITHLAENVSSREVTPPILPRTTQDTFPHNAPASSPAYTDDAHSLRKANSTTLGGLFRAVSKEFHSSKDAESPDDLLKKMAAVGINRNARITANNVAGIVNLNKEDLDSTTRRQKITEPKNFYNRHTSPQL.

Residues 1-32 (MVDDSNYLTPHETALAVVATAMKKARLQLDTL) are Extracellular-facing. The helical transmembrane segment at 33 to 53 (LINSILGGVLFSSGSFLLVAV) threads the bilayer. Residues 54–66 (YSEDPDIVARNPG) lie on the Cytoplasmic side of the membrane. The chain crosses the membrane as a helical span at residues 67 to 87 (IVNLITGVNFAMGLFYVVMMG). The Extracellular segment spans residues 88–113 (ADLFNSNILFFSVGVLRKAVTIYDLM). The helical transmembrane segment at 114-134 (ISWVVSWLGNIAGSLFVSYLF) threads the bilayer. Topologically, residues 135–165 (GHLSGISSQKLWIIGSRQIIEQKVSYSFVQT) are cytoplasmic. The helical transmembrane segment at 166-186 (FLKGIACNFFVCLAIYLQLMA) threads the bilayer. Residues 187-192 (KPIHVK) lie on the Extracellular side of the membrane. The helical transmembrane segment at 193–213 (FILMSFPIIDFIGIGFTHVVG) threads the bilayer. Topologically, residues 214–218 (DMSAS) are cytoplasmic. Residues 219 to 239 (FIAMLNGANVSVGKYIWKLLI) form a helical membrane-spanning segment. Residues 240–245 (PASLGN) lie on the Extracellular side of the membrane. Residues 246 to 266 (IVGGLFFSAVVPFYLHLVVVE) form a helical membrane-spanning segment. Topologically, residues 267–627 (RDRKRLSLPE…FYNRHTSPQL (361 aa)) are cytoplasmic. T305 is modified (phosphothreonine). The tract at residues 512-537 (PPILPRTTQDTFPHNAPASSPAYTDD) is disordered. Positions 517–533 (RTTQDTFPHNAPASSPA) are enriched in polar residues. S546 is modified (phosphoserine). A Phosphothreonine modification is found at T588. The span at 605–614 (STTRRQKITE) shows a compositional bias: basic and acidic residues. The tract at residues 605-627 (STTRRQKITEPKNFYNRHTSPQL) is disordered.

This sequence belongs to the FNT transporter (TC 1.A.16) family.

It localises to the membrane. This is an uncharacterized protein from Saccharomyces cerevisiae (strain ATCC 204508 / S288c) (Baker's yeast).